The following is a 141-amino-acid chain: MERTLTILKPDCVRKQLIGAVIDKIERAGFRVVAMKKTKLTAQTAGEFYAVHSQRPFYGELVEFMSSGPCVPMILEKENAVADFRTLIGATDPAEAAEGTIRNLFADSKGENIIHGSDSAENAQIEAGFFFSTEEAVRVNN.

Residues Lys-9, Phe-57, Arg-85, Thr-91, Arg-102, and Asn-112 each coordinate ATP. His-115 (pros-phosphohistidine intermediate) is an active-site residue.

The protein belongs to the NDK family. Homotetramer. The cofactor is Mg(2+).

It localises to the cytoplasm. The catalysed reaction is a 2'-deoxyribonucleoside 5'-diphosphate + ATP = a 2'-deoxyribonucleoside 5'-triphosphate + ADP. It carries out the reaction a ribonucleoside 5'-diphosphate + ATP = a ribonucleoside 5'-triphosphate + ADP. Functionally, major role in the synthesis of nucleoside triphosphates other than ATP. The ATP gamma phosphate is transferred to the NDP beta phosphate via a ping-pong mechanism, using a phosphorylated active-site intermediate. The chain is Nucleoside diphosphate kinase from Prosthecochloris aestuarii (strain DSM 271 / SK 413).